The sequence spans 65 residues: KappaPI-actitoxin-Ael3a (65 aa).

In terms of domain architecture, BPTI/Kunitz inhibitor spans 5-55; it reads CLLPKKQGFCRARFPRFYYNSSTRRCEMFYYGGCGGNANNFNTLEECEKVC. Intrachain disulfides connect Cys5–Cys55, Cys14–Cys38, and Cys30–Cys51.

This sequence belongs to the venom Kunitz-type family. Sea anemone type 2 potassium channel toxin subfamily.

The protein resides in the secreted. It is found in the nematocyst. Its function is as follows. Dual-function toxin that inhibits both serine proteases (trypsin Kd=124 nM) and voltage-gated potassium channels rKv1.1/KCNA1 (IC(50)=0.9 nM). The activity on the Kv1.1/KCNA1 is selective and reversible. The toxin presumably acts by blocking the channel pore in the open state. The polypeptide is KappaPI-actitoxin-Ael3a (Anthopleura elegantissima (Green aggregating anemone)).